The chain runs to 260 residues: Snake venom serine protease homolog (260 aa).

An N-terminal signal peptide occupies residues Met1 to Ala18. A propeptide spanning residues Gln19–Leu24 is cleaved from the precursor. Residues Ile25–Ala251 form the Peptidase S1 domain. 6 cysteine pairs are disulfide-bonded: Cys31-Cys165, Cys52-Cys68, Cys100-Cys258, Cys144-Cys212, Cys176-Cys191, and Cys202-Cys227. The active-site Charge relay system is the Asp112. N-linked (GlcNAc...) asparagine glycans are attached at residues Asn123 and Asn124. Ser206 serves as the catalytic Charge relay system.

This sequence belongs to the peptidase S1 family. Snake venom subfamily. Expressed by the venom gland.

Its subcellular location is the secreted. Functionally, snake venom serine protease homolog. May act in the hemostasis system of the prey. In Protobothrops jerdonii (Jerdon's pitviper), this protein is Snake venom serine protease homolog.